Consider the following 412-residue polypeptide: Glucose-1-phosphate adenylyltransferase (412 aa).

Alpha-D-glucose 1-phosphate is bound by residues tyrosine 98, glycine 163, 178-179 (EK), and serine 189.

This sequence belongs to the bacterial/plant glucose-1-phosphate adenylyltransferase family. Homotetramer.

The enzyme catalyses alpha-D-glucose 1-phosphate + ATP + H(+) = ADP-alpha-D-glucose + diphosphate. Its pathway is glycan biosynthesis; glycogen biosynthesis. In terms of biological role, involved in the biosynthesis of ADP-glucose, a building block required for the elongation reactions to produce glycogen. Catalyzes the reaction between ATP and alpha-D-glucose 1-phosphate (G1P) to produce pyrophosphate and ADP-Glc. This chain is Glucose-1-phosphate adenylyltransferase, found in Thermosipho melanesiensis (strain DSM 12029 / CIP 104789 / BI429).